The sequence spans 29 residues: Cytolysin Uc-1 (29 aa).

The span at 1 to 15 shows a compositional bias: polar residues; sequence DEQTGSKGPNENLPS. A disordered region spans residues 1–29; the sequence is DEQTGSKGPNENLPSQKDLXAKASXLTEV.

The protein localises to the secreted. Its subcellular location is the nematocyst. The protein resides in the target cell membrane. Pore-forming toxin that lyses bovine erythrocytes at nanomolar concentrations. Is devoid of enzymatic activity. Binds to monolayers and efficiently permeabilizes small lipid vesicles composed of sphingomyelin and cholesterol. The cytolytic activity is not prevented by cholesterol or sphingomyelin. In Urticina crassicornis (Mottled anemone), this protein is Cytolysin Uc-1.